We begin with the raw amino-acid sequence, 885 residues long: MNIRRCGHSENFFFIEVGRSAVTGAGEFWMQVDDSVVAQNMHETILEAMKALSDEFRPRSKSQSSSNCSNPISVPLRRHHLNHPPPSQVGLNRRARTESATATSPAGGAAKHGSSSFRVRASSDGEGTMSRPASMEGSPVSPSASRTQSHRHRGSSRLHPPLNHSRSIPMPATRCSPSATSPVSLSSSSTSGHGSTSDCMCPRRSSASISGSPSDGGFISSDEYGSSPCDFRSSFRSVTPDSMGHTPPAREEELNNYICMGKSSSHLQRGPQQRYQPSRGEELTDFDKVFRKRTHSSGTSPPTVSHQKTPSQSSIEEYTEMMPTHPVRLTSFRHSAFVPTYSYPEECLDLHLEGSRANHKDDGYMPMSPGVAPVSTKTNDYMPMSPKSVSAPQQIINPRWHSAVDSNGYMMMSPSGSCSPDNTNYSKIWTNGTNPKLSIDSIEGKLPCSDYINMSPASGSTTSTPPDSYLNSVEESTKPVYSYFSLPRSFKHVHRKSEDGNLRISANSGHNLYTEDSSSSSTSSDSLGGQDPQQPRKGEGCIQGKRLTRPTRLSLENSSKASTLPRVREPALPPEPKSPGEYVNIEFNDKVFSGGLVPSMCSLPFVQSRVVPQRENLSEYMNMDLGVWRAKTSYASTSSYEPPNKPVNSVCPTETCSSSRPPIRGKPISRDYMSMQLGSLCPDYSQVPPTRLSAKSITLSSSKSNYAEMSSGRVSDNIPAIAPASNSSLSEASRSSLLGQGSGPSAFTRVSLSPNRNPSAKVIRAGDPQGRRRHSSETFSSTPTTARVTTGPVSGEDVKRHSSASFENVWLRPGEIARRDSLQPSDHTHNGLNYIDLDLAKDLSSLDHCNSHQSGVSHPSDDLSPYASITFHKLEEHRSQAETEE.

The 56-residue stretch at 1-56 folds into the IRS-type PTB domain; that stretch reads MNIRRCGHSENFFFIEVGRSAVTGAGEFWMQVDDSVVAQNMHETILEAMKALSDEF. The segment at 56–225 is disordered; the sequence is FRPRSKSQSS…GGFISSDEYG (170 aa). 4 stretches are compositionally biased toward low complexity: residues 61–75, 99–109, 176–197, and 205–217; these read KSQSSSNCSNPISVP, SATATSPAGGA, SPSATSPVSLSSSSTSGHGSTS, and SSASISGSPSDGG. At S104 the chain carries Phosphoserine. A Phosphotyrosine; by INSR modification is found at Y257. The YXXM motif 1 motif lies at 257-260; it reads YICM. Polar residues-rich tracts occupy residues 263–276 and 296–313; these read SSSHLQRGPQQRYQ and SSGTSPPTVSHQKTPSQS. Disordered stretches follow at residues 263-282 and 293-313; these read SSSHLQRGPQQRYQPSRGEE and RTHSSGTSPPTVSHQKTPSQS. 5 short sequence motifs (YXXM motif) span residues 318–321, 364–367, 381–384, 409–412, and 451–454; these read YTEM, YMPM, YMMM, and YINM. Phosphotyrosine; by INSR is present on residues Y364 and Y381. Y409 carries the phosphotyrosine modification. Residues 501–581 are disordered; that stretch reads NLRISANSGH…LPPEPKSPGE (81 aa). The segment covering 504–515 has biased composition (polar residues); that stretch reads ISANSGHNLYTE. Residues 516–526 are compositionally biased toward low complexity; that stretch reads DSSSSSTSSDS. Residues Y582 and Y620 each carry the phosphotyrosine; by INSR modification. A GRB2-binding region spans residues 582–584; that stretch reads YVN. The short motif at 620–623 is the YXXM motif 7 element; that stretch reads YMNM. Over residues 637–660 the composition is skewed to polar residues; it reads TSSYEPPNKPVNSVCPTETCSSSR. The tract at residues 637–665 is disordered; sequence TSSYEPPNKPVNSVCPTETCSSSRPPIRG. Y672 carries the phosphotyrosine; by INSR modification. 2 consecutive short sequence motifs (YXXM motif) follow at residues 672 to 675 and 706 to 709; these read YMSM and YAEM. The disordered stretch occupies residues 732-803; the sequence is ASRSSLLGQG…SGEDVKRHSS (72 aa). 2 stretches are compositionally biased toward polar residues: residues 743–758 and 777–792; these read GPSAFTRVSLSPNRNP and ETFSSTPTTARVTTGP. Phosphotyrosine; by INSR is present on residues Y834 and Y866.

In terms of assembly, interacts with the NPXY motif of tyrosine-phosphorylated igf1r and insr via the PTB domain. Binds to phosphatidylinositol 3-kinase p85 subunit at a low level in vitro prior to phosphorylation. Binding is greatly enhanced following tyrosine phosphorylation by insr and probably occurs via the phosphorylated YXXM motifs. Post-translationally, phosphorylation of Tyr-582 is required for grb2-binding.

Its function is as follows. May mediate the control of various cellular processes by insulin. When phosphorylated by the insulin receptor binds specifically to various cellular proteins containing SH2 domains such as phosphatidylinositol 3-kinase p85 subunit or grb2. Activates phosphatidylinositol 3-kinase when bound to the regulatory p85 subunit. The chain is Insulin receptor substrate 1-A (irs1-a) from Xenopus laevis (African clawed frog).